A 444-amino-acid polypeptide reads, in one-letter code: Phosphoribosylamine--glycine ligase (444 aa).

Residues 109–324 (RNLFKKYEID…FLDVCFAIAE (216 aa)) form the ATP-grasp domain. Residue 140–202 (MTSLGKDVVV…EEKLVGVEFT (63 aa)) coordinates ATP. Gln282, Glu294, and Asn296 together coordinate Mg(2+). Gln282, Glu294, and Asn296 together coordinate Mn(2+).

Belongs to the GARS family. Requires Mg(2+) as cofactor. Mn(2+) is required as a cofactor.

It catalyses the reaction 5-phospho-beta-D-ribosylamine + glycine + ATP = N(1)-(5-phospho-beta-D-ribosyl)glycinamide + ADP + phosphate + H(+). The protein operates within purine metabolism; IMP biosynthesis via de novo pathway; N(1)-(5-phospho-D-ribosyl)glycinamide from 5-phospho-alpha-D-ribose 1-diphosphate: step 2/2. The chain is Phosphoribosylamine--glycine ligase from Methanococcus maripaludis (strain DSM 14266 / JCM 13030 / NBRC 101832 / S2 / LL).